We begin with the raw amino-acid sequence, 744 residues long: Junctophilin-3 (744 aa).

Over 1-723 (MSSGGRFNFD…LKSSTGSAPI (723 aa)) the chain is Cytoplasmic. 6 MORN repeats span residues 15 to 37 (YCGG…KGQG), 39 to 60 (YTGS…SGNT), 61 to 82 (YQGT…GKWV), 83 to 105 (YKGE…GNGA), 107 to 129 (YEGT…DGGT), and 130 to 152 (YQGQ…PYGM). The segment at 230 to 252 (SKSSLASQRSKQSSFRSEAGMST) is disordered. Low complexity predominate over residues 231–244 (KSSLASQRSKQSSF). MORN repeat units lie at residues 288-310 (YVGE…DGLK) and 311-333 (YEGE…DGTK). S440 carries the phosphoserine modification. T451 is modified (phosphothreonine). 2 disordered regions span residues 451 to 603 (TPLQ…LLEP) and 624 to 677 (CPQD…ESLR). The residue at position 457 (S457) is a Phosphoserine. T471 bears the Phosphothreonine mark. A phosphoserine mark is found at S475 and S506. A phosphoserine mark is found at S699 and S706. Residues 724–744 (LVVMVILLNIGVAILFINFFI) traverse the membrane as a helical; Anchor for type IV membrane protein segment.

The protein belongs to the junctophilin family. In terms of tissue distribution, specifically expressed in brain. Highest levels in the olfactory tubercle, caudate putamen, nucleus accumbens, hippocampal formation, piriform cortex and cerebellar cortex. Expressed in disctete neurons sites. In hippocampal formation, expressed in dendrites of hippocampal pyramidal and denate granule cells. In cerebellum, it is highly expressed in Purkinge cells, while it is weakly expressed in granular cells.

It is found in the cell membrane. The protein resides in the endoplasmic reticulum membrane. Functionally, junctophilins contribute to the formation of junctional membrane complexes (JMCs) which link the plasma membrane with the endoplasmic or sarcoplasmic reticulum in excitable cells. Provides a structural foundation for functional cross-talk between the cell surface and intracellular calcium release channels. JPH3 is brain-specific and appears to have an active role in certain neurons involved in motor coordination and memory. The protein is Junctophilin-3 (Jph3) of Mus musculus (Mouse).